Consider the following 397-residue polypeptide: L-aspartate--L-methionine ligase (397 aa).

An ATP-grasp domain is found at 131–347 (VALNNKARIP…FFNTILKYVK (217 aa)). Lysine 136, valine 171, lysine 173, glycine 183, valine 186, isoleucine 188, glutamate 215, glutamine 216, isoleucine 218, asparagine 223, and threonine 246 together coordinate ADP. Residue aspartate 288 coordinates Mg(2+). Positions 290 and 300 each coordinate ADP. Residue aspartate 301 coordinates Mg(2+). Arginine 305 serves as the catalytic Critical for catalysis.

Primarily a monomer in solution. Minor homodimer formation. Requires Mg(2+) as cofactor.

The enzyme catalyses L-aspartate + L-methionine + ATP = L-aspartyl-L-methionine + ADP + phosphate + H(+). It participates in amino-acid metabolism. L-amino acid ligase, which preferentially catalyzes the formation of L-aspartyl-L-methionine dipeptide from L-aspartate and L-methionine in the presence of ATP. Less active with L-asparagine and L-methionine as substrates. Less active with L-aspartate and either L-phenylalanine, L-valine, L-leucine or L-isoleucine as substrates. Decreased activity when L-methionine is substituted with seleno-DL-methionine, L-homocysteine, L-methionine sulfoxide, L-methionine sulfoximine and o-acetyl-L-serine. Decreased activity with acetylation of L-methionine amino group. Decreased activity by modification of L-methionine carboxylate to L-methionine methyl ester. No activity when L-methionine is substituted with L-homoserine. No activity with formylation of L-methionine amino group. No activity by modification of L-methionine carboxylate to L-methionine-glycine carboxylate. No activity when L-aspartate substrate is replaced by analogs such as L-homoserine, DL-aspartate beta-methyl ester, L-glutamate or o-acetyl-L-serine. No activity when L-aspartate amino and alpha-carboxylate groups are modified to L-malate, glycine-L-aspartate, L-aspartate-glycine or N-carbamoyl-DL-aspartate. No activity with L-methionine or L-aspartate as sole substrates. No activity in presence of other nucleoside triphosphates including GTP, CTP, UTP, TTP or ITP. Involved in sulfur amino acid metabolism. The sequence is that of L-aspartate--L-methionine ligase from Staphylococcus aureus (strain NCTC 8325 / PS 47).